The chain runs to 452 residues: Transcription factor AP-2-delta (452 aa).

Serine 239 is subject to Phosphoserine; by PKA. Positions 280 to 410 are H-S-H (helix-span-helix), dimerization; it reads RRKAANVTLL…VLSEMLNYLE (131 aa). The tract at residues 416–452 is disordered; it reads KNGGAADSGQGHANSEKAPLRKASEAAVKEGKTEKTD. The segment covering 429–452 has biased composition (basic and acidic residues); sequence NSEKAPLRKASEAAVKEGKTEKTD.

It belongs to the AP-2 family. In terms of assembly, binds DNA as a dimer. Can form homodimers or heterodimers with other AP-2 family members. In terms of tissue distribution, expressed in both embryonic and newborn brain.

Its subcellular location is the nucleus. Sequence-specific DNA-binding protein that interacts with inducible viral and cellular enhancer elements to regulate transcription of selected genes. AP-2 factors bind to the consensus sequence 5'-GCCNNNGGC-3' and activate genes involved in a large spectrum of important biological functions including proper eye, face, body wall, limb and neural tube development. They also suppress a number of genes including MCAM/MUC18, C/EBP alpha and MYC. The chain is Transcription factor AP-2-delta (Tfap2d) from Mus musculus (Mouse).